The following is a 628-amino-acid chain: 1-deoxy-D-xylulose-5-phosphate synthase (628 aa).

Thiamine diphosphate-binding positions include histidine 80 and 121–123; that span reads GHS. Aspartate 152 provides a ligand contact to Mg(2+). Residues 153-154, asparagine 181, tyrosine 289, and glutamate 370 contribute to the thiamine diphosphate site; that span reads GG. Asparagine 181 contacts Mg(2+).

This sequence belongs to the transketolase family. DXPS subfamily. Homodimer. Mg(2+) is required as a cofactor. It depends on thiamine diphosphate as a cofactor.

It catalyses the reaction D-glyceraldehyde 3-phosphate + pyruvate + H(+) = 1-deoxy-D-xylulose 5-phosphate + CO2. The protein operates within metabolic intermediate biosynthesis; 1-deoxy-D-xylulose 5-phosphate biosynthesis; 1-deoxy-D-xylulose 5-phosphate from D-glyceraldehyde 3-phosphate and pyruvate: step 1/1. Catalyzes the acyloin condensation reaction between C atoms 2 and 3 of pyruvate and glyceraldehyde 3-phosphate to yield 1-deoxy-D-xylulose-5-phosphate (DXP). In Alkalilimnicola ehrlichii (strain ATCC BAA-1101 / DSM 17681 / MLHE-1), this protein is 1-deoxy-D-xylulose-5-phosphate synthase.